Reading from the N-terminus, the 524-residue chain is 2-isopropylmalate synthase (524 aa).

The 263-residue stretch at 5-267 folds into the Pyruvate carboxyltransferase domain; sequence VIIFDTTLRD…HTNIRHSEIH (263 aa). Positions 14, 202, 204, and 238 each coordinate Mn(2+). Residues 392-524 are regulatory domain; that stretch reads KLEYLGVQSG…KTDKINTESV (133 aa).

Belongs to the alpha-IPM synthase/homocitrate synthase family. LeuA type 1 subfamily. In terms of assembly, homodimer. Requires Mn(2+) as cofactor.

The protein localises to the cytoplasm. It carries out the reaction 3-methyl-2-oxobutanoate + acetyl-CoA + H2O = (2S)-2-isopropylmalate + CoA + H(+). It functions in the pathway amino-acid biosynthesis; L-leucine biosynthesis; L-leucine from 3-methyl-2-oxobutanoate: step 1/4. Functionally, catalyzes the condensation of the acetyl group of acetyl-CoA with 3-methyl-2-oxobutanoate (2-ketoisovalerate) to form 3-carboxy-3-hydroxy-4-methylpentanoate (2-isopropylmalate). The polypeptide is 2-isopropylmalate synthase (Aeromonas salmonicida (strain A449)).